Reading from the N-terminus, the 303-residue chain is Counting factor 50 (303 aa).

An N-terminal signal peptide occupies residues 1–24 (MNKMNNIFLIISSIILSIVIFVSG). A Ch-type lysozyme domain is found at 28–240 (IDFSSEISVG…CSTSSGSASG (213 aa)). Residue N67 is glycosylated (N-linked (GlcNAc...) asparagine). E125 is a catalytic residue. The N-linked (GlcNAc...) asparagine glycan is linked to N170. The segment at 226–303 (GSGSGCSTSS…GSGTGSGSSI (78 aa)) is S-G-S motif repeats. Over residues 236 to 292 (GSASGSASGSASGSASGSNSGSSNSGSSNSGSSNSGSNSGSSNSGSGNSGSSNSGSA) the composition is skewed to low complexity. The tract at residues 236–303 (GSASGSASGS…GSGTGSGSSI (68 aa)) is disordered. Residues 293–303 (SGSGTGSGSSI) show a composition bias toward gly residues.

It belongs to the glycosyl hydrolase 25 family. Monomer. Component of the counting factor (CF) complex, which includes cf60, cf50, cf45-1 and ctnA.

The protein localises to the secreted. The catalysed reaction is Hydrolysis of (1-&gt;4)-beta-linkages between N-acetylmuramic acid and N-acetyl-D-glucosamine residues in a peptidoglycan and between N-acetyl-D-glucosamine residues in chitodextrins.. Cell-counting factor that limits the maximum size of the multicellular structure during aggregation. Has a very low lysozyme activity. This chain is Counting factor 50 (cf50-1), found in Dictyostelium discoideum (Social amoeba).